We begin with the raw amino-acid sequence, 540 residues long: Dynein axonemal assembly factor 3 homolog (540 aa).

The interval 480-499 (AVTEAMPESTFKYDTDTDYG) is disordered.

Belongs to the DNAAF3 family. In terms of tissue distribution, expressed in mechanosensory chordotonal (Ch) neurons, spermatocytes and spermatids (at protein level).

It localises to the cytoplasm. The protein localises to the dynein axonemal particle. Its function is as follows. Required for the assembly of axonemal inner and outer dynein arms. Involved in the cytoplasmic preassembly of dyneins into complexes before their transport into cilia. Essential for the development of axonemal dynein motors in the sensory cilium of mechanosensory chordotonal (Ch) neurons and sperm flagellum, and consequently, is required for the mechanotransduction process of hearing and sperm mobility. The polypeptide is Dynein axonemal assembly factor 3 homolog (Drosophila melanogaster (Fruit fly)).